The chain runs to 157 residues: Secreted effector protein See1 (157 aa).

The N-terminal stretch at 1–21 (MLFTTFVSLLLVILCLVHVSA) is a signal peptide. The disordered stretch occupies residues 124–157 (SYRYGDSHGNSREAEYSVADHQSASGEYKFGPTT). A compositionally biased stretch (basic and acidic residues) spans 128–138 (GDSHGNSREAE).

As to quaternary structure, interacts with a maize homolog of SGT1, a factor acting in cell cycle progression in yeast Saccharomyces cerevisiae and an important component of plant and human innate immunity.

It is found in the secreted. It localises to the host cytoplasm. Its subcellular location is the host nucleus. Effector protein involved in the induction of tumors in infected plant tissues by the fungus. Required for the reactivation of plant DNA synthesis, which is crucial for tumor progression in leaf cells. Interferes with the MAPK-triggered phosphorylation of maize SGT1 at a monocot-specific phosphorylation site, resulting in both modulation of immune responses and reactivation of DNA synthesis during leaf tumor formation. The protein is Secreted effector protein See1 of Mycosarcoma maydis (Corn smut fungus).